A 155-amino-acid polypeptide reads, in one-letter code: MSRRGTAKEKTAKSDPIYRNRLVNMLVNRILKHGKKSLAYQIIYRAMKKIQQKTETNPLSVLRQAIRGVTPDIAVKARRVGGSTHQVPIEIGSTQGKALAIRWLLAASRKRPGRNMAFKLSSELVDAAKGSGEAIRKKEXTHRMAEANRAFAHFR.

It belongs to the universal ribosomal protein uS7 family. As to quaternary structure, part of the 30S ribosomal subunit.

Its subcellular location is the plastid. The protein resides in the chloroplast. In terms of biological role, one of the primary rRNA binding proteins, it binds directly to 16S rRNA where it nucleates assembly of the head domain of the 30S subunit. This chain is Small ribosomal subunit protein uS7c (rps7), found in Stewartia pseudocamellia (Japanese stewartia).